The chain runs to 147 residues: Putative cystatin-9-like protein CST9LP1 (147 aa).

The N-terminal stretch at 1 to 28 (MWSLPPSRALSCAPLLLLFSFQFLVTYA) is a signal peptide. A disulfide bridge connects residues Cys-98 and Cys-108. 2 N-linked (GlcNAc...) asparagine glycosylation sites follow: Asn-117 and Asn-139. Cysteines 122 and 142 form a disulfide.

It belongs to the cystatin family.

Its subcellular location is the secreted. In Homo sapiens (Human), this protein is Putative cystatin-9-like protein CST9LP1 (CST9LP1).